A 249-amino-acid polypeptide reads, in one-letter code: NADH-quinone oxidoreductase subunit C (249 aa).

It belongs to the complex I 30 kDa subunit family. As to quaternary structure, NDH-1 is composed of 14 different subunits. Subunits NuoB, C, D, E, F, and G constitute the peripheral sector of the complex.

The protein resides in the cell inner membrane. The enzyme catalyses a quinone + NADH + 5 H(+)(in) = a quinol + NAD(+) + 4 H(+)(out). Functionally, NDH-1 shuttles electrons from NADH, via FMN and iron-sulfur (Fe-S) centers, to quinones in the respiratory chain. The immediate electron acceptor for the enzyme in this species is believed to be ubiquinone. Couples the redox reaction to proton translocation (for every two electrons transferred, four hydrogen ions are translocated across the cytoplasmic membrane), and thus conserves the redox energy in a proton gradient. This chain is NADH-quinone oxidoreductase subunit C, found in Stenotrophomonas maltophilia (strain R551-3).